Consider the following 1028-residue polypeptide: MRLLWKLVILLPLINSSAGDGLLSRPIFTQEPHDVIFPLDLSKSEVILNCAANGYPSPHYRWKQNGTDIDFTMSYHYRLDGGSLAINSPHTDQDIGMYQCLATNLLGTILSRKAKLQFAYIEDFETKTRSTVSVREGQGVVLLCGPPPHFGDLSYAWTFNDNPLYVQEDNRRFVSQETGNLYIAKVEPSDVGNYTCFITNKEAQRSVQGPPTPLVQRTDGVMGEYEPKIEVRFPETIQAAKDSSVKLECFALGNPVPDISWRRLDGSPLPGKVKYSKSQAILEIPNFQQEDEGFYECIASNLRGRNLAKGQLIFYAPPEWEQKIQNTHLSIYDNLLWECKASGKPNPWYTWLKNGERLNPEERIQIENGTLIITMLNVSDSGVYQCAAENKYQIIYANAELRVLASAPDFSKSPVKKKSFVQVGGDIVIGCKPNAFPRAAISWKRGTETLRQSKRIFLLEDGSLKIYNITRSDAGSYTCIATNQFGTAKNTGSLIVKERTVITVPPSKMDVTVGESIVLPCQVSHDPSIEVVFVWFFNGDVIDLKKGVAHFERIGGESVGDLMIRNIQLHHSGKYLCTVQTTLESLSAVADIIVRGPPGPPEDVQVEDISSTTSQLSWRAGPDNNSPIQIFTIQTRTPFSVGWQAVATVPEILNGKTYNATVVGLSPWVEYEFRVVAGNSIGIGEPSEPSELLRTKASVPVVAPVNIHGGGGSRSELVITWESIPEELQNGEGFGYIIMFRPVGSTTWSKEKVSSVESSRFVYRNESIIPLSPFEVKVGVYNNEGEGSLSTVTIVYSGEDEPQLAPRGTSLQSFSASEMEVSWNAIAWNRNTGRVLGYEVLYWTDDSKESMIGKIRVSGNVTTKNITGLKANTIYFASVRAYNTAGTGPSSPPVNVTTKKSPPSQPPANIAWKLTNSKLCLNWEHVKTMENESEVLGYKILYRQNRQSKTHILETNNTSAELLVPFEEDYLIEIRTVSDGGDGSSSEEIRIPKMSSLSSRGIQFLEPSTHFLSIVIVIFHCFAIQPLI.

The first 19 residues, 1 to 19 (MRLLWKLVILLPLINSSAG), serve as a signal peptide directing secretion. Ig-like C2-type domains lie at 26 to 117 (PIFT…AKLQ), 122 to 208 (EDFE…RSVQ), 227 to 308 (PKIE…RNLA), 318 to 402 (PEWE…AELR), 408 to 495 (PDFS…GSLI), and 499 to 587 (RTVI…ESLS). 6 cysteine pairs are disulfide-bonded: Cys50/Cys100, Cys144/Cys196, Cys249/Cys297, Cys339/Cys386, Cys431/Cys479, and Cys521/Cys577. Residues Asn65 and Asn193 are each glycosylated (N-linked (GlcNAc...) asparagine). 3 N-linked (GlcNAc...) asparagine glycosylation sites follow: Asn368, Asn377, and Asn468. Fibronectin type-III domains follow at residues 600–698 (PPED…TKAS), 703–800 (APVN…SGED), 805–901 (APRG…TKKS), and 902–996 (PPSQ…KMSS). N-linked (GlcNAc...) asparagine glycans are attached at residues Asn659, Asn765, Asn860, and Asn865. Tyr882 is subject to Phosphotyrosine. Residues 887–902 (TGPSSPPVNVTTKKSP) show a composition bias toward polar residues. Positions 887–908 (TGPSSPPVNVTTKKSPPSQPPA) are disordered. N-linked (GlcNAc...) asparagine glycosylation is found at Asn895, Asn931, Asn956, and Asn957. The GPI-anchor amidated serine moiety is linked to residue Ser999. The propeptide at 1000-1028 (RGIQFLEPSTHFLSIVIVIFHCFAIQPLI) is removed in mature form.

Belongs to the immunoglobulin superfamily. Contactin family. Interacts with PTPRG. As to expression, expressed in nervous system. Highly expressed in cerebellum. Expressed at intermediate level in thalamus, subthalamic nucleus. Weakly expressed in corpus callosum, caudate nucleus and spinal cord.

The protein localises to the cell membrane. Contactins mediate cell surface interactions during nervous system development. Participates in oligodendrocytes generation by acting as a ligand of NOTCH1. Its association with NOTCH1 promotes NOTCH1 activation through the released notch intracellular domain (NICD) and subsequent translocation to the nucleus. Involved in motor coordination. This Homo sapiens (Human) protein is Contactin-6 (CNTN6).